Reading from the N-terminus, the 143-residue chain is Large ribosomal subunit protein eL28z (143 aa).

It belongs to the eukaryotic ribosomal protein eL28 family. As to quaternary structure, component of the large ribosomal subunit. As to expression, expressed in seedlings, roots, stems, leaves, inflorescences and siliques.

The protein resides in the cytoplasm. Its subcellular location is the nucleus. The protein localises to the nucleolus. It is found in the nucleoplasm. Functionally, component of the large ribosomal subunit. Essential in leaf polarity establishment, probably having a role for translation in leaf dorsoventral patterning to specify leaf adaxial identity. In Arabidopsis thaliana (Mouse-ear cress), this protein is Large ribosomal subunit protein eL28z.